Reading from the N-terminus, the 324-residue chain is Beta-ketoacyl-[acyl-carrier-protein] synthase III (324 aa).

Residues Cys-112 and His-249 contribute to the active site. Residues 250-254 (QANRR) are ACP-binding. Asn-279 is a catalytic residue.

It belongs to the thiolase-like superfamily. FabH family. In terms of assembly, homodimer.

It is found in the cytoplasm. It catalyses the reaction malonyl-[ACP] + acetyl-CoA + H(+) = 3-oxobutanoyl-[ACP] + CO2 + CoA. The protein operates within lipid metabolism; fatty acid biosynthesis. Catalyzes the condensation reaction of fatty acid synthesis by the addition to an acyl acceptor of two carbons from malonyl-ACP. Catalyzes the first condensation reaction which initiates fatty acid synthesis and may therefore play a role in governing the total rate of fatty acid production. Possesses both acetoacetyl-ACP synthase and acetyl transacylase activities. Its substrate specificity determines the biosynthesis of branched-chain and/or straight-chain of fatty acids. This is Beta-ketoacyl-[acyl-carrier-protein] synthase III from Streptococcus equi subsp. equi (strain 4047).